Consider the following 515-residue polypeptide: GMP synthase [glutamine-hydrolyzing] (515 aa).

Positions 10–200 constitute a Glutamine amidotransferase type-1 domain; the sequence is TIIVLDFGSQ…VFGVCGCSEG (191 aa). Residue Cys-87 is the Nucleophile of the active site. Active-site residues include His-174 and Glu-176. In terms of domain architecture, GMPS ATP-PPase spans 201–390; sequence WNMENFIEVE…LGIPDEIVWR (190 aa). 228-234 contacts ATP; the sequence is SGGVDSS.

Homodimer.

The catalysed reaction is XMP + L-glutamine + ATP + H2O = GMP + L-glutamate + AMP + diphosphate + 2 H(+). The protein operates within purine metabolism; GMP biosynthesis; GMP from XMP (L-Gln route): step 1/1. Catalyzes the synthesis of GMP from XMP. The sequence is that of GMP synthase [glutamine-hydrolyzing] from Bacillus anthracis (strain A0248).